The chain runs to 134 residues: Large ribosomal subunit protein bL17 (134 aa).

Belongs to the bacterial ribosomal protein bL17 family. Part of the 50S ribosomal subunit. Contacts protein L32.

This Paracidovorax citrulli (strain AAC00-1) (Acidovorax citrulli) protein is Large ribosomal subunit protein bL17.